The primary structure comprises 154 residues: 2S sulfur-rich seed storage protein 2 (154 aa).

The first 22 residues, 1–22 (MAKMSVVAAALLALLVLGQATA), serve as a signal peptide directing secretion. Positions 29–52 (TTLEEEQEENPRGRSEQQCREQME) are disordered. A compositionally biased stretch (basic and acidic residues) spans 37–52 (ENPRGRSEQQCREQME). 4 disulfide bridges follow: C47/C101, C60/C90, C91/C138, and C103/C145. The propeptide occupies 72–76 (PYQNP). The propeptide occupies 151–154 (TAWL).

The protein belongs to the 2S seed storage albumins family. The mature protein consists of a small and a large chain linked by disulfide bonds.

This is a 2S seed storage protein. The protein is 2S sulfur-rich seed storage protein 2 (BE2S2) of Bertholletia excelsa (Brazil nut).